Consider the following 570-residue polypeptide: Fibropellin-3 (570 aa).

The signal sequence occupies residues methionine 1–threonine 17. The region spanning tyrosine 18–aspartate 55 is the EGF-like 1 domain. 4 cysteine pairs are disulfide-bonded: cysteine 23/cysteine 34, cysteine 28/cysteine 43, cysteine 45/cysteine 54, and cysteine 62/cysteine 88. The N-linked (GlcNAc...) asparagine glycan is linked to asparagine 30. The CUB domain occupies cysteine 62 to serine 175. The N-linked (GlcNAc...) asparagine glycan is linked to asparagine 136. The region spanning aspartate 176–glutamate 212 is the EGF-like 2; calcium-binding domain. Cystine bridges form between cysteine 180/cysteine 191, cysteine 185/cysteine 200, cysteine 202/cysteine 211, cysteine 218/cysteine 229, cysteine 223/cysteine 238, cysteine 240/cysteine 249, cysteine 256/cysteine 267, cysteine 261/cysteine 276, cysteine 278/cysteine 287, cysteine 294/cysteine 305, cysteine 299/cysteine 314, cysteine 316/cysteine 325, cysteine 332/cysteine 343, cysteine 337/cysteine 352, cysteine 354/cysteine 363, cysteine 370/cysteine 381, cysteine 375/cysteine 390, cysteine 392/cysteine 401, cysteine 408/cysteine 419, cysteine 413/cysteine 428, cysteine 430/cysteine 439, and cysteine 445/cysteine 521. The EGF-like 3; calcium-binding domain occupies aspartate 214–glutamate 250. Residues asparagine 252–glutamate 288 enclose the EGF-like 4; calcium-binding domain. Positions aspartate 290–glutamate 326 constitute an EGF-like 5; calcium-binding domain. The EGF-like 6; calcium-binding domain occupies asparagine 328–glutamate 364. Asparagine 357 carries an N-linked (GlcNAc...) asparagine glycan. Residues serine 366–glutamate 402 form the EGF-like 7 domain. The 37-residue stretch at aspartate 404–glutamate 440 folds into the EGF-like 8; calcium-binding domain. An Avidin-like domain is found at glycine 443–glutamine 562.

In terms of assembly, homotetramer.

It is found in the secreted. The protein localises to the extracellular space. Forms the apical lamina, a component of the extracellular matrix. The sequence is that of Fibropellin-3 (EGF3) from Strongylocentrotus purpuratus (Purple sea urchin).